Reading from the N-terminus, the 160-residue chain is Cytochrome b6-f complex subunit 4 (160 aa).

The next 3 helical transmembrane spans lie at 36–56 (LLYV…ALAV), 95–115 (LLGI…PFIE), and 131–151 (AVFL…TFPI).

It belongs to the cytochrome b family. PetD subfamily. The 4 large subunits of the cytochrome b6-f complex are cytochrome b6, subunit IV (17 kDa polypeptide, PetD), cytochrome f and the Rieske protein, while the 4 small subunits are PetG, PetL, PetM and PetN. The complex functions as a dimer.

It is found in the cellular thylakoid membrane. Component of the cytochrome b6-f complex, which mediates electron transfer between photosystem II (PSII) and photosystem I (PSI), cyclic electron flow around PSI, and state transitions. The protein is Cytochrome b6-f complex subunit 4 of Rippkaea orientalis (strain PCC 8801 / RF-1) (Cyanothece sp. (strain PCC 8801)).